We begin with the raw amino-acid sequence, 97 residues long: Carboxysome shell protein CsoS1B (97 aa).

The region spanning 8 to 93 (ALGMIETRGL…PHKEVEPVLT (86 aa)) is the BMC domain.

This sequence belongs to the bacterial microcompartments protein family. CsoS1 subfamily. As to quaternary structure, homohexamer with a small central pore.

It localises to the carboxysome. Its function is as follows. One of shell proteins of the carboxysome, a polyhedral inclusion where RuBisCO (ribulose bisphosphate carboxylase, ccbL-ccbS) is sequestered. Assembles into hexamers which make sheets that form the facets of the polyhedral carboxysome. The shell probably limits the diffusion of CO(2) into and out of the carboxysome. In Hydrogenovibrio crunogenus (strain DSM 25203 / XCL-2) (Thiomicrospira crunogena), this protein is Carboxysome shell protein CsoS1B.